Here is a 160-residue protein sequence, read N- to C-terminus: MRIWIDADACPKAAKELVCKFALKRKLEVWMVAGQPQVKPPFACVRLVVVESGMDAADDYLVEQAEPGDLAICSDVPLADRLIKKQVAALDPRGREFDARNMGDKLAMRNLMADLRDQGQMGGGQAPYAERDRQAFANALDRLLTRLQREADLRASQPHR.

It belongs to the UPF0178 family.

This chain is UPF0178 protein PA14_69280, found in Pseudomonas aeruginosa (strain UCBPP-PA14).